The primary structure comprises 251 residues: Methionine aminopeptidase (251 aa).

Histidine 79 is a substrate binding site. A divalent metal cation-binding residues include aspartate 96, aspartate 107, and histidine 170. Histidine 177 provides a ligand contact to substrate. A divalent metal cation is bound by residues glutamate 204 and glutamate 235.

This sequence belongs to the peptidase M24A family. Methionine aminopeptidase type 1 subfamily. As to quaternary structure, monomer. Co(2+) serves as cofactor. It depends on Zn(2+) as a cofactor. The cofactor is Mn(2+). Fe(2+) is required as a cofactor.

The enzyme catalyses Release of N-terminal amino acids, preferentially methionine, from peptides and arylamides.. Its function is as follows. Removes the N-terminal methionine from nascent proteins. The N-terminal methionine is often cleaved when the second residue in the primary sequence is small and uncharged (Met-Ala-, Cys, Gly, Pro, Ser, Thr, or Val). Requires deformylation of the N(alpha)-formylated initiator methionine before it can be hydrolyzed. This chain is Methionine aminopeptidase, found in Borreliella burgdorferi (strain ATCC 35210 / DSM 4680 / CIP 102532 / B31) (Borrelia burgdorferi).